Consider the following 88-residue polypeptide: Translation initiation factor IF-1 1 (88 aa).

The S1-like domain maps to 1-72 (MSKEDMIELE…TKGRINFRHP (72 aa)). Residues 66-88 (RINFRHPTANPGAGPRPSHHHRR) form a disordered region.

Belongs to the IF-1 family. Component of the 30S ribosomal translation pre-initiation complex which assembles on the 30S ribosome in the order IF-2 and IF-3, IF-1 and N-formylmethionyl-tRNA(fMet); mRNA recruitment can occur at any time during PIC assembly.

It is found in the cytoplasm. Functionally, one of the essential components for the initiation of protein synthesis. Stabilizes the binding of IF-2 and IF-3 on the 30S subunit to which N-formylmethionyl-tRNA(fMet) subsequently binds. Helps modulate mRNA selection, yielding the 30S pre-initiation complex (PIC). Upon addition of the 50S ribosomal subunit IF-1, IF-2 and IF-3 are released leaving the mature 70S translation initiation complex. The protein is Translation initiation factor IF-1 1 of Chromobacterium violaceum (strain ATCC 12472 / DSM 30191 / JCM 1249 / CCUG 213 / NBRC 12614 / NCIMB 9131 / NCTC 9757 / MK).